The following is a 271-amino-acid chain: Type III pantothenate kinase (271 aa).

6 to 13 is a binding site for ATP; sequence DVRNTNIV. 109 to 112 is a substrate binding site; that stretch reads GADR. D111 (proton acceptor) is an active-site residue. D131 contacts K(+). An ATP-binding site is contributed by T134. Residue T186 coordinates substrate.

Belongs to the type III pantothenate kinase family. As to quaternary structure, homodimer. NH4(+) is required as a cofactor. Requires K(+) as cofactor.

Its subcellular location is the cytoplasm. It carries out the reaction (R)-pantothenate + ATP = (R)-4'-phosphopantothenate + ADP + H(+). It functions in the pathway cofactor biosynthesis; coenzyme A biosynthesis; CoA from (R)-pantothenate: step 1/5. In terms of biological role, catalyzes the phosphorylation of pantothenate (Pan), the first step in CoA biosynthesis. The protein is Type III pantothenate kinase of Rhodococcus jostii (strain RHA1).